Here is a 371-residue protein sequence, read N- to C-terminus: tRNA-specific 2-thiouridylase MnmA (371 aa).

Residues 12-19 (GMSGGVDS) and Met38 contribute to the ATP site. An interaction with target base in tRNA region spans residues 98 to 100 (NPD). The Nucleophile role is filled by Cys103. Cys103 and Cys200 form a disulfide bridge. Gly128 lines the ATP pocket. An interaction with tRNA region spans residues 150 to 152 (KDQ). Cys200 acts as the Cysteine persulfide intermediate in catalysis. The segment at 312–313 (RY) is interaction with tRNA.

This sequence belongs to the MnmA/TRMU family. Interacts with TusE.

It is found in the cytoplasm. It catalyses the reaction S-sulfanyl-L-cysteinyl-[protein] + uridine(34) in tRNA + AH2 + ATP = 2-thiouridine(34) in tRNA + L-cysteinyl-[protein] + A + AMP + diphosphate + H(+). Catalyzes the 2-thiolation of uridine at the wobble position (U34) of tRNA(Lys), tRNA(Glu) and tRNA(Gln), leading to the formation of s(2)U34, the first step of tRNA-mnm(5)s(2)U34 synthesis. Sulfur is provided by IscS, via a sulfur-relay system. Binds ATP and its substrate tRNAs. This is tRNA-specific 2-thiouridylase MnmA from Yersinia pseudotuberculosis serotype O:1b (strain IP 31758).